The primary structure comprises 1939 residues: Myosin-4 (1939 aa).

The Myosin N-terminal SH3-like domain occupies 33-82 (DAKSSVFVVDAKESYVKATVQSREGGKVTAKTEGGATVTVKDDQVFSMNP). Ser-36 bears the Phosphoserine mark. 2 positions are modified to phosphothreonine: Thr-64 and Thr-69. A Phosphoserine modification is found at Ser-79. The 697-residue stretch at 86–782 (DKIEDMAMMT…LLGTLEEMRD (697 aa)) folds into the Myosin motor domain. Lys-130 carries the post-translational modification N6,N6,N6-trimethyllysine. 179-186 (GESGAGKT) contacts ATP. Residue Tyr-389 is modified to Phosphotyrosine. At Thr-391 the chain carries Phosphothreonine. Ser-392 is subject to Phosphoserine. A Phosphothreonine modification is found at Thr-419. Tyr-424 carries the phosphotyrosine modification. Position 625 is a phosphoserine (Ser-625). Residues 659–681 (LNKLMTNLKSTHPHFVRCLIPNE) form an actin-binding region. His-757 carries the post-translational modification Pros-methylhistidine. Positions 761–775 (KFGHTKVFFKAGLLG) are actin-binding. A Phosphothreonine modification is found at Thr-776. In terms of domain architecture, IQ spans 785–814 (LAQLITRTQAVCRGYLMRVEFKKMMERRES). The stretch at 843–1939 (LLKSAETEKE…EVHTKVISEE (1097 aa)) forms a coiled coil. Phosphoserine is present on residues Ser-1092 and Ser-1096. Disordered regions lie at residues 1128-1147 (AERA…SREL) and 1153-1172 (RLEE…KKRE). Residues Ser-1162 and Ser-1237 each carry the phosphoserine modification. Thr-1241 is subject to Phosphothreonine. The residue at position 1243 (Ser-1243) is a Phosphoserine. Thr-1255 is subject to Phosphothreonine. The residue at position 1261 (Ser-1261) is a Phosphoserine. Phosphothreonine is present on Thr-1265. The tract at residues 1276 to 1299 (ELSTQKARLHTESGEFSRQLDEKD) is disordered. Ser-1278 carries the phosphoserine modification. The segment covering 1284 to 1299 (LHTESGEFSRQLDEKD) has biased composition (basic and acidic residues). Thr-1286 carries the phosphothreonine modification. Phosphoserine occurs at positions 1288, 1292, 1303, 1306, and 1413. Phosphotyrosine is present on Tyr-1464. Phosphothreonine is present on Thr-1467. A Phosphoserine modification is found at Ser-1474. A Phosphotyrosine modification is found at Tyr-1492. Ser-1495 is subject to Phosphoserine. Thr-1501 is subject to Phosphothreonine. The residue at position 1514 (Ser-1514) is a Phosphoserine. Thr-1517 bears the Phosphothreonine mark. Phosphoserine is present on residues Ser-1542, Ser-1547, Ser-1554, Ser-1574, Ser-1600, Ser-1603, Ser-1714, and Ser-1726. A phosphothreonine mark is found at Thr-1730 and Thr-1736. Ser-1739 bears the Phosphoserine mark.

Belongs to the TRAFAC class myosin-kinesin ATPase superfamily. Myosin family. In terms of assembly, muscle myosin is a hexameric protein that consists of 2 heavy chain subunits (MHC), 2 alkali light chain subunits (MLC) and 2 regulatory light chain subunits (MLC-2). In terms of tissue distribution, expressed in type 2b myofibers in the tibialis anterior muscle (at protein level).

The protein resides in the cytoplasm. It localises to the myofibril. Its function is as follows. Muscle contraction. The sequence is that of Myosin-4 (Myh4) from Mus musculus (Mouse).